A 196-amino-acid polypeptide reads, in one-letter code: Holliday junction branch migration complex subunit RuvA (196 aa).

The tract at residues 1-63 (MYEYFKGIIS…EDAELLYGFA (63 aa)) is domain I. The segment at 64–142 (TEEEKQLFLS…AAGSPAESKA (79 aa)) is domain II. The interval 143-146 (PVQT) is flexible linker. Residues 147–196 (ADNQELEEAMEAMLALGYKAAELKKIKKFFEGTTDTAENYIKSALKMLVK) are domain III.

This sequence belongs to the RuvA family. Homotetramer. Forms an RuvA(8)-RuvB(12)-Holliday junction (HJ) complex. HJ DNA is sandwiched between 2 RuvA tetramers; dsDNA enters through RuvA and exits via RuvB. An RuvB hexamer assembles on each DNA strand where it exits the tetramer. Each RuvB hexamer is contacted by two RuvA subunits (via domain III) on 2 adjacent RuvB subunits; this complex drives branch migration. In the full resolvosome a probable DNA-RuvA(4)-RuvB(12)-RuvC(2) complex forms which resolves the HJ.

It localises to the cytoplasm. Functionally, the RuvA-RuvB-RuvC complex processes Holliday junction (HJ) DNA during genetic recombination and DNA repair, while the RuvA-RuvB complex plays an important role in the rescue of blocked DNA replication forks via replication fork reversal (RFR). RuvA specifically binds to HJ cruciform DNA, conferring on it an open structure. The RuvB hexamer acts as an ATP-dependent pump, pulling dsDNA into and through the RuvAB complex. HJ branch migration allows RuvC to scan DNA until it finds its consensus sequence, where it cleaves and resolves the cruciform DNA. In Streptococcus sanguinis (strain SK36), this protein is Holliday junction branch migration complex subunit RuvA.